A 158-amino-acid polypeptide reads, in one-letter code: NAD(P)H-quinone oxidoreductase subunit J, chloroplastic (158 aa).

The protein belongs to the complex I 30 kDa subunit family. As to quaternary structure, NDH is composed of at least 16 different subunits, 5 of which are encoded in the nucleus.

The protein resides in the plastid. The protein localises to the chloroplast thylakoid membrane. The catalysed reaction is a plastoquinone + NADH + (n+1) H(+)(in) = a plastoquinol + NAD(+) + n H(+)(out). It catalyses the reaction a plastoquinone + NADPH + (n+1) H(+)(in) = a plastoquinol + NADP(+) + n H(+)(out). NDH shuttles electrons from NAD(P)H:plastoquinone, via FMN and iron-sulfur (Fe-S) centers, to quinones in the photosynthetic chain and possibly in a chloroplast respiratory chain. The immediate electron acceptor for the enzyme in this species is believed to be plastoquinone. Couples the redox reaction to proton translocation, and thus conserves the redox energy in a proton gradient. The polypeptide is NAD(P)H-quinone oxidoreductase subunit J, chloroplastic (Eucalyptus globulus subsp. globulus (Tasmanian blue gum)).